A 212-amino-acid polypeptide reads, in one-letter code: Guanylate kinase (212 aa).

One can recognise a Guanylate kinase-like domain in the interval 14 to 192 (GTALVICAPS…AYDELRATYL (179 aa)). Residue 21–28 (APSGTGKT) participates in ATP binding.

Belongs to the guanylate kinase family.

The protein resides in the cytoplasm. It catalyses the reaction GMP + ATP = GDP + ADP. Its function is as follows. Essential for recycling GMP and indirectly, cGMP. This Lawsonia intracellularis (strain PHE/MN1-00) protein is Guanylate kinase.